Here is a 464-residue protein sequence, read N- to C-terminus: tRNA-2-methylthio-N(6)-dimethylallyladenosine synthase (464 aa).

The interval methionine 1–proline 25 is disordered. Residues arginine 27–glycine 142 enclose the MTTase N-terminal domain. The [4Fe-4S] cluster site is built by cysteine 36, cysteine 72, cysteine 105, cysteine 180, cysteine 184, and cysteine 187. The region spanning alanine 166–glutamate 398 is the Radical SAM core domain. The 64-residue stretch at alanine 401–alanine 464 folds into the TRAM domain.

This sequence belongs to the methylthiotransferase family. MiaB subfamily. Monomer. Requires [4Fe-4S] cluster as cofactor.

Its subcellular location is the cytoplasm. The enzyme catalyses N(6)-dimethylallyladenosine(37) in tRNA + (sulfur carrier)-SH + AH2 + 2 S-adenosyl-L-methionine = 2-methylsulfanyl-N(6)-dimethylallyladenosine(37) in tRNA + (sulfur carrier)-H + 5'-deoxyadenosine + L-methionine + A + S-adenosyl-L-homocysteine + 2 H(+). Functionally, catalyzes the methylthiolation of N6-(dimethylallyl)adenosine (i(6)A), leading to the formation of 2-methylthio-N6-(dimethylallyl)adenosine (ms(2)i(6)A) at position 37 in tRNAs that read codons beginning with uridine. This Anaeromyxobacter dehalogenans (strain 2CP-C) protein is tRNA-2-methylthio-N(6)-dimethylallyladenosine synthase.